The following is a 493-amino-acid chain: Voltage-gated potassium channel regulatory subunit KCNF1 (493 aa).

Topologically, residues 1–183 (MDASAEQSLP…KPESSCPARV (183 aa)) are cytoplasmic. The helical transmembrane segment at 184–204 (VAVLSFLLILVSSVVMCMGTI) threads the bilayer. The helical transmembrane segment at 224–244 (NVETACIGWFTLEYLLRLFSS) threads the bilayer. Over 245-249 (PNKLH) the chain is Cytoplasmic. A helical transmembrane segment spans residues 250–270 (FALSFMNIVDVLAILPFYVSL). A helical; Voltage-sensor membrane pass occupies residues 290–310 (QALRIMRIARIFKLARHSSGL). The Cytoplasmic portion of the chain corresponds to 311 to 324 (QTLTYALKRSFKEL). Residues 325 to 345 (GLLLMYLAVGIFVFSALGYTM) form a helical membrane-spanning segment. The segment at residues 358–378 (PQSFWWAIITMTTVGYGDIYP) is an intramembrane region (pore-forming). The Selectivity filter motif lies at 370-375 (TVGYGD). A helical membrane pass occupies residues 386 to 406 (NAAISFLCGVIAIALPIHPII). Over 407–493 (NNFVRYYNKQ…HHRTRLQSCK (87 aa)) the chain is Cytoplasmic. Residues 434–468 (SSSAEGKPGGSRSDLDTLPPEPAAREGPSWGSRLK) are disordered.

The protein belongs to the potassium channel family. F (TC 1.A.1.2) subfamily. Kv5.1/KCNF1 sub-subfamily. As to quaternary structure, heterotetramer with KCNB1 or KCNB2.

The protein resides in the cell membrane. Regulatory alpha-subunit of the voltage-gated potassium (Kv) channel which, when coassembled with KCNB1 or KCNB2, can modulate their expression and their gating kinetics by acting on deactivation upon repolarization and inactivation during maintained depolarization. Accelerates inactivation but has relatively little effect on deactivation. Coexpression with KCNB1 or KCNB2 markedly slows inactivation. Each modulatory subunit has its own specific properties of regulation, and can lead to extensive inhibitions, to large changes in kinetics, and/or to large shifts in the voltage dependencies of the inactivation process. The gating kinetics depends on the nature and stoichiometry of the associated regulatory sunbunit. Fails to produce a potassium current when expressed alone. This chain is Voltage-gated potassium channel regulatory subunit KCNF1, found in Mus musculus (Mouse).